The sequence spans 113 residues: UPF0122 protein LCA_0713 (113 aa).

It belongs to the UPF0122 family.

Functionally, might take part in the signal recognition particle (SRP) pathway. This is inferred from the conservation of its genetic proximity to ftsY/ffh. May be a regulatory protein. In Latilactobacillus sakei subsp. sakei (strain 23K) (Lactobacillus sakei subsp. sakei), this protein is UPF0122 protein LCA_0713.